Consider the following 78-residue polypeptide: Acyl carrier protein (78 aa).

A Carrier domain is found at Ser2–Gln77. Ser37 carries the post-translational modification O-(pantetheine 4'-phosphoryl)serine.

Belongs to the acyl carrier protein (ACP) family. In terms of processing, 4'-phosphopantetheine is transferred from CoA to a specific serine of apo-ACP by AcpS. This modification is essential for activity because fatty acids are bound in thioester linkage to the sulfhydryl of the prosthetic group.

The protein localises to the cytoplasm. Its pathway is lipid metabolism; fatty acid biosynthesis. Functionally, carrier of the growing fatty acid chain in fatty acid biosynthesis. In Pseudomonas fluorescens (strain SBW25), this protein is Acyl carrier protein.